We begin with the raw amino-acid sequence, 156 residues long: Glutamate-rich protein 2 (156 aa).

2 disordered regions span residues 29-66 (LQDIDDKLSESAEDDGEDDTNDEDDDEDSNPKKNTQAP) and 116-156 (EKTQ…EDGS). Acidic residues-rich tracts occupy residues 39–56 (SAEDDGEDDTNDEDDDED) and 140–156 (SDEELSDESSDEGEDGS).

This is Glutamate-rich protein 2 (ERICH2) from Homo sapiens (Human).